The following is a 380-amino-acid chain: Kappa-type opioid receptor (380 aa).

The Extracellular portion of the chain corresponds to Met1 to Ala57. N-linked (GlcNAc...) asparagine glycosylation is found at Asn25 and Asn39. The chain crosses the membrane as a helical span at residues Ile58–Ile85. The Cytoplasmic portion of the chain corresponds to Arg86–Asn95. The helical transmembrane segment at Ile96–Tyr119 threads the bilayer. Topologically, residues Leu120–Lys132 are extracellular. Cys131 and Cys210 form a disulfide bridge. Residues Ile133–Val154 form a helical membrane-spanning segment. The Cytoplasmic segment spans residues Asp155–Leu173. A helical transmembrane segment spans residues Lys174–Leu196. The Extracellular segment spans residues Gly197–Trp222. The chain crosses the membrane as a helical span at residues Asp223–Thr247. At Leu248–Arg274 the chain is on the cytoplasmic side. Residues Leu275–Val296 form a helical membrane-spanning segment. Residues Glu297 to Ser311 lie on the Extracellular side of the membrane. Residues Tyr312–Leu333 form a helical membrane-spanning segment. Topologically, residues Asp334–Val380 are cytoplasmic. Cys345 carries S-palmitoyl cysteine lipidation.

The protein belongs to the G-protein coupled receptor 1 family. Interacts with NHERF1. Interacts with GABARAPL1.

It is found in the cell membrane. In terms of biological role, G-protein coupled opioid receptor that functions as a receptor for endogenous alpha-neoendorphins and dynorphins, but has low affinity for beta-endorphins. Also functions as a receptor for various synthetic opioids and for the psychoactive diterpene salvinorin A. Ligand binding causes a conformation change that triggers signaling via guanine nucleotide-binding proteins (G proteins) and modulates the activity of down-stream effectors, such as adenylate cyclase. Signaling leads to the inhibition of adenylate cyclase activity. Inhibits neurotransmitter release by reducing calcium ion currents and increasing potassium ion conductance. Plays a role in the perception of pain. Plays a role in mediating reduced physical activity upon treatment with synthetic opioids. Plays a role in the regulation of salivation in response to synthetic opioids. May play a role in arousal and regulation of autonomic and neuroendocrine functions. This chain is Kappa-type opioid receptor (OPRK1), found in Cavia porcellus (Guinea pig).